The sequence spans 186 residues: piRNA-mediated silencing protein C19orf84 (186 aa).

2 disordered regions span residues Met-1–Asp-42 and Ser-89–Tyr-186. Residues Asn-13–Thr-22 are compositionally biased toward polar residues. Pro residues predominate over residues Pro-24–Leu-36. The segment covering Arg-114–Leu-126 has biased composition (basic residues). Positions Arg-145–Leu-157 are enriched in pro residues.

Interacts with SPOCD1.

The protein localises to the nucleus. The protein resides in the nucleoplasm. In terms of biological role, protein adapter involved in piRNA-directed transposon methylation by connecting PIWIL4-piRNA and DNA methylation machineries. The PIWIL4-piRNA pathway plays a central role during spermatogenesis by directing transposon DNA methylation and silencing, thereby preventing their mobilization, which is essential for the germline integrity. The sequence is that of piRNA-mediated silencing protein C19orf84 from Homo sapiens (Human).